The primary structure comprises 138 residues: Acidic phospholipase A2 inhibitor chain HPD-1I (138 aa).

An N-terminal signal peptide occupies residues 1–16 (MRTLWIVAVCLIGVEG). 7 disulfides stabilise this stretch: Cys42-Cys131, Cys44-Cys60, Cys59-Cys111, Cys65-Cys138, Cys66-Cys104, Cys73-Cys97, and Cys91-Cys102.

Heterodimer of an acidic and a basic chain; non-covalently linked. The basic chain is toxic and has phospholipase A2 activity (chain HDP-1P (AC Q1RP79) or HDP-2P (AC Q1RP78)) and the acidic chain is non-toxic and functions as its inhibitor (chain HPD-1I). Expressed by the venom gland.

It is found in the secreted. In terms of biological role, heterodimer: slightly affects neuromuscular transmission acting presynaptically. It has a low catalytic activity, a low anticoagulant activity and weakly inhibits ADP-induced platelet aggregation. Monomer: has no activity (neurotoxic, catalytic, anticoagulant and a ADP-induced platelet aggregation), but inhibits phospholipase A2. The sequence is that of Acidic phospholipase A2 inhibitor chain HPD-1I from Vipera nikolskii (Nikolsky's adder).